Consider the following 82-residue polypeptide: Large ribosomal subunit protein bL31B-2 (82 aa).

It belongs to the bacterial ribosomal protein bL31 family. Type B subfamily. As to quaternary structure, part of the 50S ribosomal subunit.

This is Large ribosomal subunit protein bL31B-2 from Streptomyces avermitilis (strain ATCC 31267 / DSM 46492 / JCM 5070 / NBRC 14893 / NCIMB 12804 / NRRL 8165 / MA-4680).